Here is a 199-residue protein sequence, read N- to C-terminus: Cutinase CUT1 (199 aa).

The signal sequence occupies residues 1 to 18 (MKFTTLATLALGAVSALA). Positions 19 to 27 (APVTELESR) are excised as a propeptide. At Gln-28 the chain carries Pyrrolidone carboxylic acid. Cys-31 and Cys-105 are joined by a disulfide. Ser-116 (nucleophile) is an active-site residue. Cys-164 and Cys-171 are joined by a disulfide. The active site involves Asp-168. His-181 (proton donor/acceptor) is an active-site residue.

It belongs to the cutinase family. In terms of processing, the 2 disulfide bonds play a critical role in holding the catalytic residues in juxta-position; reduction of the disulfide bridges results in the complete inactivation of the enzyme.

It carries out the reaction cutin + H2O = cutin monomers.. Catalyzes the hydrolysis of complex carboxylic polyesters found in the cell wall of plants. Degrades cutin, a macromolecule that forms the structure of the plant cuticle. Also degrades suberin, a specialized macromolecule found in the cell wall of various plant tissues. The sequence is that of Cutinase CUT1 from Coprinopsis cinerea (Inky cap fungus).